A 142-amino-acid polypeptide reads, in one-letter code: Large ribosomal subunit protein uL13 (142 aa).

The protein belongs to the universal ribosomal protein uL13 family. In terms of assembly, part of the 50S ribosomal subunit.

In terms of biological role, this protein is one of the early assembly proteins of the 50S ribosomal subunit, although it is not seen to bind rRNA by itself. It is important during the early stages of 50S assembly. In Wigglesworthia glossinidia brevipalpis, this protein is Large ribosomal subunit protein uL13.